A 323-amino-acid polypeptide reads, in one-letter code: Serine racemase (323 aa).

Ser32, Ser33, and Lys52 together coordinate ATP. Lys57 functions as the Proton acceptor in the catalytic mechanism. A Lysino-D-alanine (Lys); alternate modification is found at Lys57. N6-(pyridoxal phosphate)lysine; alternate is present on Lys57. Thr79 contributes to the Ca(2+) binding site. Ser82 serves as the catalytic Proton acceptor. Asn84 is a pyridoxal 5'-phosphate binding site. 2 residues coordinate ATP: Gln87 and Tyr119. Asp176 is a Mg(2+) binding site. Pyridoxal 5'-phosphate-binding residues include Gly183, Gly184, Gly185, Gly186, and Leu187. Positions 208, 212, and 214 each coordinate Ca(2+). Positions 208, 212, and 214 each coordinate Mg(2+). Residues Glu208, Gly212, and Asp214 each contribute to the Mn(2+) site. Lys277 contacts ATP. Ser308 contributes to the pyridoxal 5'-phosphate binding site. Asn311 provides a ligand contact to ATP.

It belongs to the serine/threonine dehydratase family. As to quaternary structure, homodimer. Requires Mg(2+) as cofactor. It depends on Mn(2+) as a cofactor. The cofactor is Ca(2+). Pyridoxal 5'-phosphate serves as cofactor. Post-translationally, modification of the active site Lys by its substrate Ser to lysino-D-alanine reduces but does not abolish enzyme activity.

The catalysed reaction is L-serine = D-serine. It catalyses the reaction L-serine = pyruvate + NH4(+). It carries out the reaction D-serine = pyruvate + NH4(+). With respect to regulation, allosterically activated by ATP, by magnesium, and possibly also by other divalent metal cations. Functionally, catalyzes the synthesis of D-serine from L-serine. Has dehydratase activity towards both L-serine and D-serine. This Schizosaccharomyces pombe (strain 972 / ATCC 24843) (Fission yeast) protein is Serine racemase.